The sequence spans 744 residues: Phosphoribosylformylglycinamidine synthase subunit PurL (744 aa).

The active site involves H50. 2 residues coordinate ATP: Y53 and K92. E94 is a Mg(2+) binding site. Substrate-binding positions include 95–98 (SHNH) and R117. H96 (proton acceptor) is an active-site residue. D118 contacts Mg(2+). Q241 provides a ligand contact to substrate. D269 is a Mg(2+) binding site. 313–315 (ESQ) lines the substrate pocket. Residues D494 and G531 each contribute to the ATP site. Position 532 (N532) interacts with Mg(2+). Residue S534 participates in substrate binding.

The protein belongs to the FGAMS family. As to quaternary structure, monomer. Part of the FGAM synthase complex composed of 1 PurL, 1 PurQ and 2 PurS subunits.

The protein resides in the cytoplasm. It catalyses the reaction N(2)-formyl-N(1)-(5-phospho-beta-D-ribosyl)glycinamide + L-glutamine + ATP + H2O = 2-formamido-N(1)-(5-O-phospho-beta-D-ribosyl)acetamidine + L-glutamate + ADP + phosphate + H(+). It functions in the pathway purine metabolism; IMP biosynthesis via de novo pathway; 5-amino-1-(5-phospho-D-ribosyl)imidazole from N(2)-formyl-N(1)-(5-phospho-D-ribosyl)glycinamide: step 1/2. Part of the phosphoribosylformylglycinamidine synthase complex involved in the purines biosynthetic pathway. Catalyzes the ATP-dependent conversion of formylglycinamide ribonucleotide (FGAR) and glutamine to yield formylglycinamidine ribonucleotide (FGAM) and glutamate. The FGAM synthase complex is composed of three subunits. PurQ produces an ammonia molecule by converting glutamine to glutamate. PurL transfers the ammonia molecule to FGAR to form FGAM in an ATP-dependent manner. PurS interacts with PurQ and PurL and is thought to assist in the transfer of the ammonia molecule from PurQ to PurL. This is Phosphoribosylformylglycinamidine synthase subunit PurL from Chelativorans sp. (strain BNC1).